Consider the following 398-residue polypeptide: UPF0496 protein At5g66660 (398 aa).

2 consecutive transmembrane segments (helical) span residues 240–260 and 263–283; these read VFFATAYVSVLVLSVVATTMS and PVVCAVASGSTAPIEITGKWF.

The protein belongs to the UPF0496 family.

It localises to the membrane. This Arabidopsis thaliana (Mouse-ear cress) protein is UPF0496 protein At5g66660.